The chain runs to 394 residues: Elongation factor Tu 2 (394 aa).

A tr-type G domain is found at 10 to 204 (KPHVNVGTIG…FLDSYIPEPE (195 aa)). The G1 stretch occupies residues 19 to 26 (GHVDHGKT). 19 to 26 (GHVDHGKT) is a binding site for GTP. Thr26 provides a ligand contact to Mg(2+). Residues 60–64 (GITIN) form a G2 region. The interval 81 to 84 (DCPG) is G3. GTP is bound by residues 81 to 85 (DCPGH) and 136 to 139 (NKCD). The G4 stretch occupies residues 136-139 (NKCD). The interval 174–176 (SAL) is G5.

Belongs to the TRAFAC class translation factor GTPase superfamily. Classic translation factor GTPase family. EF-Tu/EF-1A subfamily. In terms of assembly, monomer.

Its subcellular location is the cytoplasm. It catalyses the reaction GTP + H2O = GDP + phosphate + H(+). In terms of biological role, GTP hydrolase that promotes the GTP-dependent binding of aminoacyl-tRNA to the A-site of ribosomes during protein biosynthesis. This Escherichia coli O139:H28 (strain E24377A / ETEC) protein is Elongation factor Tu 2.